A 652-amino-acid polypeptide reads, in one-letter code: Inactive leucine-rich repeat receptor-like serine/threonine-protein kinase At1g60630 (652 aa).

Positions 1–23 (MISSSSCMFFLVFAFFLISPVRS) are cleaved as a signal peptide. Over 24–256 (SDVEALLSLK…SRTKLIGIIS (233 aa)) the chain is Extracellular. LRR repeat units follow at residues 64 to 84 (SKLV…SLNQ), 85 to 108 (LDQL…LSGL), 109 to 132 (VNLK…LTSL), 134 to 156 (RLKT…LLRL), 158 to 178 (RLYT…PLNQ), and 179 to 203 (ATLR…ALNR). Asparagine 72, asparagine 104, and asparagine 120 each carry an N-linked (GlcNAc...) asparagine glycan. Asparagine 185, asparagine 205, and asparagine 225 each carry an N-linked (GlcNAc...) asparagine glycan. The chain crosses the membrane as a helical span at residues 257-277 (GSICGGILILLLTFLLICLLW). At 278–652 (RRKRSKSKRE…SLPREDHMSI (375 aa)) the chain is on the cytoplasmic side. The segment at 286–321 (REERRSKRVAESKEAKTAETEEGTSDQKNKRFSWEK) is disordered. One can recognise a Protein kinase domain in the interval 350-624 (KASAETLGRG…VKDARAEAAL (275 aa)). Serine 352 is subject to Phosphoserine. ATP is bound by residues 356–364 (LGRGTLGST) and lysine 378. 2 positions are modified to phosphoserine: serine 430 and serine 433. Threonine 509 bears the Phosphothreonine mark. The disordered stretch occupies residues 630–652 (SDHSPGRWSDTIQSLPREDHMSI).

It belongs to the protein kinase superfamily. Ser/Thr protein kinase family.

The protein localises to the cell membrane. This Arabidopsis thaliana (Mouse-ear cress) protein is Inactive leucine-rich repeat receptor-like serine/threonine-protein kinase At1g60630.